The primary structure comprises 594 residues: Spermidine/putrescine import ATP-binding protein PotA (594 aa).

Residues 24–435 enclose the ABC transporter domain; sequence IEIKKINKTY…PANNWVANFI (412 aa). ATP is bound at residue 57 to 64; it reads GPSGCGKT. The segment at 125–304 is insert; it reads RKPIENVSAD…EWFDKKKLTR (180 aa).

The protein belongs to the ABC transporter superfamily. Spermidine/putrescine importer (TC 3.A.1.11.1) family. The complex is composed of two ATP-binding proteins (PotA), two transmembrane proteins (PotB and PotC) and a solute-binding protein (PotD).

It is found in the cell membrane. The catalysed reaction is ATP + H2O + polyamine-[polyamine-binding protein]Side 1 = ADP + phosphate + polyamineSide 2 + [polyamine-binding protein]Side 1.. Part of the ABC transporter complex PotABCD involved in spermidine/putrescine import. Responsible for energy coupling to the transport system. In Malacoplasma penetrans (strain HF-2) (Mycoplasma penetrans), this protein is Spermidine/putrescine import ATP-binding protein PotA.